A 285-amino-acid chain; its full sequence is HTH-type transcriptional regulator MurR (285 aa).

The region spanning 1-77 (MLYLTKIRNA…MALIGEYSAS (77 aa)) is the HTH rpiR-type domain. The segment at residues 37–56 (SRKMAKQLGISQSSIVKFAQ) is a DNA-binding region (H-T-H motif). In terms of domain architecture, SIS spans 128–268 (IIEVISKAPF…FVGLVQLNDV (141 aa)).

As to quaternary structure, homotetramer.

The protein operates within amino-sugar metabolism; N-acetylmuramate degradation [regulation]. Functionally, represses the expression of the murPQ operon involved in the uptake and degradation of N-acetylmuramic acid (MurNAc). Binds to two adjacent inverted repeats within the operator region. MurNAc 6-phosphate, the substrate of MurQ, is the specific inducer that weakens binding of MurR to the operator. The chain is HTH-type transcriptional regulator MurR from Escherichia coli O157:H7.